The following is a 301-amino-acid chain: ATP synthase gamma chain (301 aa).

Belongs to the ATPase gamma chain family. As to quaternary structure, F-type ATPases have 2 components, CF(1) - the catalytic core - and CF(0) - the membrane proton channel. CF(1) has five subunits: alpha(3), beta(3), gamma(1), delta(1), epsilon(1). CF(0) has three main subunits: a, b and c.

It is found in the cell inner membrane. Produces ATP from ADP in the presence of a proton gradient across the membrane. The gamma chain is believed to be important in regulating ATPase activity and the flow of protons through the CF(0) complex. This Bordetella avium (strain 197N) protein is ATP synthase gamma chain.